Consider the following 227-residue polypeptide: Cytochrome c oxidase subunit 2 (227 aa).

Topologically, residues Met1 to Ser14 are mitochondrial intermembrane. The helical transmembrane segment at Pro15 to Met45 threads the bilayer. The Mitochondrial matrix segment spans residues Leu46–Gln59. A helical membrane pass occupies residues Glu60–Met87. Over Asp88–Met227 the chain is Mitochondrial intermembrane. Cu cation contacts are provided by His161, Cys196, Glu198, Cys200, His204, and Met207. Glu198 provides a ligand contact to Mg(2+). Tyr218 is subject to Phosphotyrosine.

The protein belongs to the cytochrome c oxidase subunit 2 family. As to quaternary structure, component of the cytochrome c oxidase (complex IV, CIV), a multisubunit enzyme composed of 14 subunits. The complex is composed of a catalytic core of 3 subunits MT-CO1, MT-CO2 and MT-CO3, encoded in the mitochondrial DNA, and 11 supernumerary subunits COX4I, COX5A, COX5B, COX6A, COX6B, COX6C, COX7A, COX7B, COX7C, COX8 and NDUFA4, which are encoded in the nuclear genome. The complex exists as a monomer or a dimer and forms supercomplexes (SCs) in the inner mitochondrial membrane with NADH-ubiquinone oxidoreductase (complex I, CI) and ubiquinol-cytochrome c oxidoreductase (cytochrome b-c1 complex, complex III, CIII), resulting in different assemblies (supercomplex SCI(1)III(2)IV(1) and megacomplex MCI(2)III(2)IV(2)). Found in a complex with TMEM177, COA6, COX18, COX20, SCO1 and SCO2. Interacts with TMEM177 in a COX20-dependent manner. Interacts with COX20. Interacts with COX16. Cu cation serves as cofactor.

Its subcellular location is the mitochondrion inner membrane. It carries out the reaction 4 Fe(II)-[cytochrome c] + O2 + 8 H(+)(in) = 4 Fe(III)-[cytochrome c] + 2 H2O + 4 H(+)(out). Functionally, component of the cytochrome c oxidase, the last enzyme in the mitochondrial electron transport chain which drives oxidative phosphorylation. The respiratory chain contains 3 multisubunit complexes succinate dehydrogenase (complex II, CII), ubiquinol-cytochrome c oxidoreductase (cytochrome b-c1 complex, complex III, CIII) and cytochrome c oxidase (complex IV, CIV), that cooperate to transfer electrons derived from NADH and succinate to molecular oxygen, creating an electrochemical gradient over the inner membrane that drives transmembrane transport and the ATP synthase. Cytochrome c oxidase is the component of the respiratory chain that catalyzes the reduction of oxygen to water. Electrons originating from reduced cytochrome c in the intermembrane space (IMS) are transferred via the dinuclear copper A center (CU(A)) of subunit 2 and heme A of subunit 1 to the active site in subunit 1, a binuclear center (BNC) formed by heme A3 and copper B (CU(B)). The BNC reduces molecular oxygen to 2 water molecules using 4 electrons from cytochrome c in the IMS and 4 protons from the mitochondrial matrix. In Lycaon pictus (African wild dog), this protein is Cytochrome c oxidase subunit 2 (MT-CO2).